Reading from the N-terminus, the 512-residue chain is Acid-sensing ion channel 2 (512 aa).

Over 1–42 (MDLKESPSEGSLQPSSIQIFANTSTLHGIRHIFVYGPLTIRR) the chain is Cytoplasmic. Residues Ser-8 and Ser-11 each carry the phosphoserine modification. Residues 43-64 (VLWAVAFVGSLGLLLVESSERV) form a helical membrane-spanning segment. Topologically, residues 65 to 424 (SYYFSYQHVT…ETIEQKKAYE (360 aa)) are extracellular. Intrachain disulfides connect Cys-92–Cys-193, Cys-289–Cys-364, Cys-307–Cys-360, Cys-311–Cys-358, Cys-320–Cys-342, and Cys-322–Cys-334. 2 N-linked (GlcNAc...) asparagine glycosylation sites follow: Asn-365 and Asn-392. A helical membrane pass occupies residues 425-439 (VAALLGDIGGQMGLF). The Cytoplasmic portion of the chain corresponds to 440–512 (IGASILTILE…TLGTLEEIAC (73 aa)). The GAS motif; ion selectivity filter signature appears at 441–443 (GAS).

The protein belongs to the amiloride-sensitive sodium channel (TC 1.A.6) family. ASIC2 subfamily. In terms of assembly, can form homotrimers. Heterotrimer; forms functional heterotrimers producing channel with different properties. Forms heterotrimers with ASIC1; while ASIC1 determines current amplitude, ASIC2 influences the properties of the current. Forms heterotrimers with ASIC3; resulting in channels with distinct properties. Interacts with STOM; STOM regulates the gating of ASIC2-containing channels. Interacts with PICK1; promotes ASIC3 phosphorylation by PKC and activation of ASIC2/ASIC3 heterotrimers. As to expression, expressed in brain, cerebellum, trigeminal sensory ganglia and also detected in testis.

It is found in the cell membrane. It catalyses the reaction Na(+)(in) = Na(+)(out). The enzyme catalyses K(+)(in) = K(+)(out). The catalysed reaction is Li(+)(in) = Li(+)(out). With respect to regulation, inhibited by the diuretic drug amiloride. Inhibited by gadolinium ions, the heterotrimer with ASIC3 being more sensitive. Heterotrimer composed of ASIC1 and ASIC2 are inhibited by the snake venom mambalgin-1. Forms pH-gated trimeric sodium channels that act as postsynaptic excitatory sensors in the nervous system. Upon extracellular acidification, these channels generate rapid, transient inward currents that fully desensitize. Highly selective for sodium, they are permeable to other cations. By forming heterotrimeric channels with ASIC1, could contribute to synaptic plasticity, learning, and memory. Additionally, as acid sensors at nerve terminals, plays a role in mechanosensation and phototransduction. The sequence is that of Acid-sensing ion channel 2 from Homo sapiens (Human).